A 204-amino-acid polypeptide reads, in one-letter code: NADH-quinone oxidoreductase subunit C (204 aa).

It belongs to the complex I 30 kDa subunit family. As to quaternary structure, NDH-1 is composed of 14 different subunits. Subunits NuoB, C, D, E, F, and G constitute the peripheral sector of the complex.

It is found in the cell inner membrane. It carries out the reaction a quinone + NADH + 5 H(+)(in) = a quinol + NAD(+) + 4 H(+)(out). NDH-1 shuttles electrons from NADH, via FMN and iron-sulfur (Fe-S) centers, to quinones in the respiratory chain. The immediate electron acceptor for the enzyme in this species is believed to be ubiquinone. Couples the redox reaction to proton translocation (for every two electrons transferred, four hydrogen ions are translocated across the cytoplasmic membrane), and thus conserves the redox energy in a proton gradient. This is NADH-quinone oxidoreductase subunit C from Polaromonas naphthalenivorans (strain CJ2).